We begin with the raw amino-acid sequence, 372 residues long: Aminomethyltransferase (372 aa).

It belongs to the GcvT family. As to quaternary structure, the glycine cleavage system is composed of four proteins: P, T, L and H.

It catalyses the reaction N(6)-[(R)-S(8)-aminomethyldihydrolipoyl]-L-lysyl-[protein] + (6S)-5,6,7,8-tetrahydrofolate = N(6)-[(R)-dihydrolipoyl]-L-lysyl-[protein] + (6R)-5,10-methylene-5,6,7,8-tetrahydrofolate + NH4(+). Functionally, the glycine cleavage system catalyzes the degradation of glycine. In Streptomyces coelicolor (strain ATCC BAA-471 / A3(2) / M145), this protein is Aminomethyltransferase.